Consider the following 53-residue polypeptide: Small, acid-soluble spore protein K (53 aa).

A disordered region spans residues 1–53 (MRNKEHNFPNQNNNKFEGEPRAKSEYASKRADGTTNTHPQERMRASGERSDFF). Composition is skewed to basic and acidic residues over residues 16 to 32 (FEGEPRAKSEYASKRAD) and 39 to 53 (PQERMRASGERSDFF).

Belongs to the SspK family.

Its subcellular location is the spore core. In Geobacillus thermodenitrificans (strain NG80-2), this protein is Small, acid-soluble spore protein K.